A 279-amino-acid chain; its full sequence is Large ribosomal subunit protein uL2 (279 aa).

Residues 223-279 form a disordered region; sequence MAMNPVDHPMGGGEGKSKSGGGRKHPKSPWGQLAKGLKTRNKKKASSKLIVRGRKSK. A compositionally biased stretch (gly residues) spans 232–242; that stretch reads MGGGEGKSKSG. Positions 259-279 are enriched in basic residues; sequence LKTRNKKKASSKLIVRGRKSK.

It belongs to the universal ribosomal protein uL2 family. As to quaternary structure, part of the 50S ribosomal subunit. Forms a bridge to the 30S subunit in the 70S ribosome.

One of the primary rRNA binding proteins. Required for association of the 30S and 50S subunits to form the 70S ribosome, for tRNA binding and peptide bond formation. It has been suggested to have peptidyltransferase activity; this is somewhat controversial. Makes several contacts with the 16S rRNA in the 70S ribosome. This chain is Large ribosomal subunit protein uL2, found in Prosthecochloris aestuarii (strain DSM 271 / SK 413).